Reading from the N-terminus, the 298-residue chain is Diphthine methyl ester synthase (298 aa).

Residues leucine 9, aspartate 85, glycine 88, 113–114 (SV), leucine 164, leucine 222, and histidine 247 contribute to the S-adenosyl-L-methionine site.

It belongs to the diphthine synthase family.

It is found in the cytoplasm. It catalyses the reaction 2-[(3S)-amino-3-carboxypropyl]-L-histidyl-[translation elongation factor 2] + 4 S-adenosyl-L-methionine = diphthine methyl ester-[translation elongation factor 2] + 4 S-adenosyl-L-homocysteine + 3 H(+). The protein operates within protein modification; peptidyl-diphthamide biosynthesis. Functionally, S-adenosyl-L-methionine-dependent methyltransferase that catalyzes four methylations of the modified target histidine residue in translation elongation factor 2 (EF-2), to form an intermediate called diphthine methyl ester. The four successive methylation reactions represent the second step of diphthamide biosynthesis. The sequence is that of Diphthine methyl ester synthase (DPH5) from Kluyveromyces lactis (strain ATCC 8585 / CBS 2359 / DSM 70799 / NBRC 1267 / NRRL Y-1140 / WM37) (Yeast).